We begin with the raw amino-acid sequence, 281 residues long: Glyoxalase 1 (281 aa).

VOC domains follow at residues 4–127 and 132–251; these read RALH…IGKA and KVLR…FVGD.

Belongs to the glyoxalase I family.

Functionally, thought to act as a glyoxalase. May remove methylglyoxal from mitochondrial proteins. Has roles in reducing oxidative stress and increasing lifespan. The protein is Glyoxalase 1 of Caenorhabditis briggsae.